The following is a 140-amino-acid chain: ATP synthase epsilon chain (140 aa).

This sequence belongs to the ATPase epsilon chain family. As to quaternary structure, F-type ATPases have 2 components, CF(1) - the catalytic core - and CF(0) - the membrane proton channel. CF(1) has five subunits: alpha(3), beta(3), gamma(1), delta(1), epsilon(1). CF(0) has three main subunits: a, b and c.

It localises to the cell inner membrane. In terms of biological role, produces ATP from ADP in the presence of a proton gradient across the membrane. This chain is ATP synthase epsilon chain, found in Neisseria gonorrhoeae (strain ATCC 700825 / FA 1090).